A 234-amino-acid polypeptide reads, in one-letter code: Orotate phosphoribosyltransferase (234 aa).

Position 30 (Lys-30) interacts with 5-phospho-alpha-D-ribose 1-diphosphate. 38–39 (FF) lines the orotate pocket. 5-phospho-alpha-D-ribose 1-diphosphate contacts are provided by residues 76 to 77 (YK), Arg-103, Lys-104, Lys-107, His-109, and 128 to 136 (DDVITAGTA). Residues Thr-132 and Arg-160 each coordinate orotate.

Belongs to the purine/pyrimidine phosphoribosyltransferase family. PyrE subfamily. As to quaternary structure, homodimer. Requires Mg(2+) as cofactor.

It catalyses the reaction orotidine 5'-phosphate + diphosphate = orotate + 5-phospho-alpha-D-ribose 1-diphosphate. It functions in the pathway pyrimidine metabolism; UMP biosynthesis via de novo pathway; UMP from orotate: step 1/2. Functionally, catalyzes the transfer of a ribosyl phosphate group from 5-phosphoribose 1-diphosphate to orotate, leading to the formation of orotidine monophosphate (OMP). This is Orotate phosphoribosyltransferase from Chromohalobacter salexigens (strain ATCC BAA-138 / DSM 3043 / CIP 106854 / NCIMB 13768 / 1H11).